A 921-amino-acid chain; its full sequence is Isoleucine--tRNA ligase (921 aa).

A 'HIGH' region motif is present at residues 57–67 (PYANGDIHMGH). Residue glutamate 552 participates in L-isoleucyl-5'-AMP binding. Residues 593–597 (KMSKS) carry the 'KMSKS' region motif. Lysine 596 contacts ATP. The Zn(2+) site is built by cysteine 888, cysteine 891, cysteine 908, and cysteine 911.

The protein belongs to the class-I aminoacyl-tRNA synthetase family. IleS type 1 subfamily. In terms of assembly, monomer. Requires Zn(2+) as cofactor.

Its subcellular location is the cytoplasm. It catalyses the reaction tRNA(Ile) + L-isoleucine + ATP = L-isoleucyl-tRNA(Ile) + AMP + diphosphate. Catalyzes the attachment of isoleucine to tRNA(Ile). As IleRS can inadvertently accommodate and process structurally similar amino acids such as valine, to avoid such errors it has two additional distinct tRNA(Ile)-dependent editing activities. One activity is designated as 'pretransfer' editing and involves the hydrolysis of activated Val-AMP. The other activity is designated 'posttransfer' editing and involves deacylation of mischarged Val-tRNA(Ile). This Bacillus cereus (strain 03BB102) protein is Isoleucine--tRNA ligase.